The chain runs to 179 residues: Nucleoside-triphosphatase THEP1 (179 aa).

Residues 7–14 (GRPGVGKT) and 94–101 (LIIVDEIG) each bind ATP.

Belongs to the THEP1 NTPase family.

It carries out the reaction a ribonucleoside 5'-triphosphate + H2O = a ribonucleoside 5'-diphosphate + phosphate + H(+). In terms of biological role, has nucleotide phosphatase activity towards ATP, GTP, CTP, TTP and UTP. May hydrolyze nucleoside diphosphates with lower efficiency. The sequence is that of Nucleoside-triphosphatase THEP1 from Thermotoga petrophila (strain ATCC BAA-488 / DSM 13995 / JCM 10881 / RKU-1).